The primary structure comprises 564 residues: Phenylalanine--tRNA ligase beta subunit (564 aa).

The B5 domain occupies 286–362; that stretch reads YFQNTLEVSV…IGRGLDSFKP (77 aa). Mg(2+) contacts are provided by D340, D346, E349, and E350.

This sequence belongs to the phenylalanyl-tRNA synthetase beta subunit family. Type 2 subfamily. Tetramer of two alpha and two beta subunits. It depends on Mg(2+) as a cofactor.

It localises to the cytoplasm. The enzyme catalyses tRNA(Phe) + L-phenylalanine + ATP = L-phenylalanyl-tRNA(Phe) + AMP + diphosphate + H(+). The polypeptide is Phenylalanine--tRNA ligase beta subunit (Borrelia hermsii (strain HS1 / DAH)).